The sequence spans 524 residues: MVPQALLLVPILGFSSCFGKFPIYTIPDTLGPWSPIDIHHLSCPNNLVVEDEGCTNLSGFSYMELKVGYISAIKVNGFTCTGVVTEAETYTNFVGYVTTTFKRKHFRPTPDACRAAYNWKMAGDPRYEESLHSPYPDYHWLRTVKTTKESLVIISPSVADLDPYDNSLHSRVFPSGKCSGITVSSVYCSTNHDYTVWMPESLRLGTSCDIFTNSRGKRASKGSKTCGFVDERGLYKSLKGACKLKLCGVLGLRLMDGTWVAMQTSNETKWCPPDQLVNLHDLRSDEIEHLVIEELVKKREECLDALESIITTKSVSFRRLSYLRKLVPGFGKAYTIFNKTLMEAEAHYKSVRTWNEIIPSKGCLRVGGRCHPHVNGVFFNGIILGPDGHVLIPEMQSSLLQQHIELLESSVIPLMHPLADPFTVFKDGDETEDFIEVHLPDVHEQVSGVDLGLPNWGEYVLLSAGTLIALMLIIFLMTCCRKVDRPESTQRSLRGTGRNVSVTSQSGKFIPSWESYKSGGETGL.

A signal peptide spans 1 to 19 (MVPQALLLVPILGFSSCFG). The Virion surface portion of the chain corresponds to 20–459 (KFPIYTIPDT…DLGLPNWGEY (440 aa)). Intrachain disulfides connect Cys43-Cys302, Cys54-Cys226, Cys80-Cys113, Cys178-Cys188, Cys208-Cys247, and Cys242-Cys271. N-linked (GlcNAc...) asparagine; by host glycosylation is present at Asn56. 2 N-linked (GlcNAc...) asparagine; by host glycosylation sites follow: Asn266 and Asn338. A disulfide bridge links Cys363 with Cys370. The helical transmembrane segment at 460–480 (VLLSAGTLIALMLIIFLMTCC) threads the bilayer. A lipid anchor (S-palmitoyl cysteine; by host) is attached at Cys480. The Intravirion portion of the chain corresponds to 481–524 (RKVDRPESTQRSLRGTGRNVSVTSQSGKFIPSWESYKSGGETGL).

Belongs to the lyssavirus glycoprotein family. In terms of assembly, homotrimer. Interacts with matrix protein. Interacts with host TRFC. Interacts with host BST2; this interaction inhibits viral budding by tethering new virions to the cell surface. Interacts with ITGB1. Interacts with host GRM2. Post-translationally, glycosylated and palmitoylated by host. Glycosylation is crucial for glycoprotein export at the cell surface.

It localises to the virion membrane. Functionally, attaches the virus to host cellular receptor, inducing endocytosis of the virion by using different host proteins including TFRC, GRM2 and ITGB1. In the endosome, the acidic pH induces conformational changes in the glycoprotein trimer, which trigger fusion between virus and cell membrane. There is convincing in vitro evidence that the muscular form of the nicotinic acetylcholine receptor (nAChR), the neuronal cell adhesion molecule (NCAM), and the p75 neurotrophin receptor (p75NTR) bind glycoprotein and thereby facilitate rabies virus entry into cells. This Rabies virus (strain Nishigahara RCEH) (RABV) protein is Glycoprotein (G).